A 161-amino-acid polypeptide reads, in one-letter code: Cytochrome c-type biogenesis protein CcmE (161 aa).

Topologically, residues 1-8 (MNPRRKKR) are cytoplasmic. Residues 9 to 29 (LGLILALFVGISATVGLMLYA) form a helical; Signal-anchor for type II membrane protein membrane-spanning segment. Over 30 to 161 (LNQNMDLFYT…TEQQKQGTGQ (132 aa)) the chain is Periplasmic. Positions 129 and 133 each coordinate heme. Positions 142 to 161 (MKKTHEPLQYTEQQKQGTGQ) are disordered. A compositionally biased stretch (polar residues) spans 151–161 (YTEQQKQGTGQ).

This sequence belongs to the CcmE/CycJ family.

The protein resides in the cell inner membrane. In terms of biological role, heme chaperone required for the biogenesis of c-type cytochromes. Transiently binds heme delivered by CcmC and transfers the heme to apo-cytochromes in a process facilitated by CcmF and CcmH. This chain is Cytochrome c-type biogenesis protein CcmE, found in Aliivibrio fischeri (strain ATCC 700601 / ES114) (Vibrio fischeri).